Consider the following 317-residue polypeptide: ADIPOR-like receptor IZH2 (317 aa).

Residues 1 to 78 are Cytoplasmic-facing; it reads MSTLLERTKS…TFKSLFYLHN (78 aa). A helical membrane pass occupies residues 79–99; the sequence is ESVNIYSHLIPALGFFTVLLL. At 100–110 the chain is on the extracellular side; it reads DKSTIKVFATT. Residues 111-131 traverse the membrane as a helical segment; sequence TWLDHMVIDLFYSGAFACLIL. The Cytoplasmic portion of the chain corresponds to 132–153; sequence SSSFHCLKSHSLRIATLGNKLD. Residues 154-174 traverse the membrane as a helical segment; that stretch reads YLGICILIVTSMVSILYYGYF. Topologically, residues 175–176 are extracellular; sequence EK. The helical transmembrane segment at 177-197 threads the bilayer; that stretch reads FSLFCLFALITVSFGIACSIV. Residues 198–212 lie on the Cytoplasmic side of the membrane; sequence SLKDKFRKREWRPYR. A helical transmembrane segment spans residues 213–233; the sequence is AGLFVCFGLSSIIPIFSGLYC. The Extracellular portion of the chain corresponds to 234-242; that stretch reads YSFSEIWTQ. A helical membrane pass occupies residues 243–263; that stretch reads IQLFWVLLGGVLYIIGAVLYG. The Cytoplasmic portion of the chain corresponds to 264 to 276; sequence MRFPEKICPGKFD. The helical transmembrane segment at 277 to 297 threads the bilayer; the sequence is IWGHSHQLFHFLVVIAALCHL. At 298–317 the chain is on the extracellular side; it reads RGLLNSYELVHIKMENGIVS.

This sequence belongs to the ADIPOR family.

The protein resides in the membrane. In terms of biological role, probable receptor, which is involved in metabolic pathways that regulate lipid metabolism such as fatty acid oxidation. The polypeptide is ADIPOR-like receptor IZH2 (IZH2) (Saccharomyces cerevisiae (strain ATCC 204508 / S288c) (Baker's yeast)).